Consider the following 191-residue polypeptide: MFAAENGLKGDPRLEAISAAIRVVPNFPKKGIMFQDITTLLLDHKAFKHTIDIFVDRYKDMQISVVAGVEARGFLFGPSIALAIGAKFIPLRKPGKLPGKVISESYELEYGHDRLEMHVGAVEPRERVIIIDDLVATGGTLSAAMSLLESQGAEVVECACVIGLPEVKGQHKLKGKPLYVLVEPSGLDEFC.

Belongs to the purine/pyrimidine phosphoribosyltransferase family. In terms of assembly, homodimer.

The protein localises to the cytoplasm. The enzyme catalyses AMP + diphosphate = 5-phospho-alpha-D-ribose 1-diphosphate + adenine. Its pathway is purine metabolism; AMP biosynthesis via salvage pathway; AMP from adenine: step 1/1. Functionally, catalyzes a salvage reaction resulting in the formation of AMP, that is energically less costly than de novo synthesis. May contribute to the recycling of adenine into adenylate nucleotides and the inactivation of cytokinins by phosphoribosylation. Possesses low activity toward adenine, but can efficiently convert cytokinins from free bases (active form) to the corresponding nucleotides (inactive form). This is Adenine phosphoribosyltransferase 5 (APT5) from Arabidopsis thaliana (Mouse-ear cress).